We begin with the raw amino-acid sequence, 145 residues long: 3-hydroxyacyl-[acyl-carrier-protein] dehydratase FabZ (145 aa).

H48 is a catalytic residue.

The protein belongs to the thioester dehydratase family. FabZ subfamily.

The protein localises to the cytoplasm. The enzyme catalyses a (3R)-hydroxyacyl-[ACP] = a (2E)-enoyl-[ACP] + H2O. Involved in unsaturated fatty acids biosynthesis. Catalyzes the dehydration of short chain beta-hydroxyacyl-ACPs and long chain saturated and unsaturated beta-hydroxyacyl-ACPs. The chain is 3-hydroxyacyl-[acyl-carrier-protein] dehydratase FabZ from Marinobacter nauticus (strain ATCC 700491 / DSM 11845 / VT8) (Marinobacter aquaeolei).